A 570-amino-acid chain; its full sequence is Proline--tRNA ligase (570 aa).

This sequence belongs to the class-II aminoacyl-tRNA synthetase family. ProS type 1 subfamily. Homodimer.

It localises to the cytoplasm. It catalyses the reaction tRNA(Pro) + L-proline + ATP = L-prolyl-tRNA(Pro) + AMP + diphosphate. Functionally, catalyzes the attachment of proline to tRNA(Pro) in a two-step reaction: proline is first activated by ATP to form Pro-AMP and then transferred to the acceptor end of tRNA(Pro). As ProRS can inadvertently accommodate and process non-cognate amino acids such as alanine and cysteine, to avoid such errors it has two additional distinct editing activities against alanine. One activity is designated as 'pretransfer' editing and involves the tRNA(Pro)-independent hydrolysis of activated Ala-AMP. The other activity is designated 'posttransfer' editing and involves deacylation of mischarged Ala-tRNA(Pro). The misacylated Cys-tRNA(Pro) is not edited by ProRS. In Thermoanaerobacter pseudethanolicus (strain ATCC 33223 / 39E) (Clostridium thermohydrosulfuricum), this protein is Proline--tRNA ligase.